The following is a 182-amino-acid chain: uncharacterized protein (182 aa).

It belongs to the staphylococcal tandem lipoprotein family.

This is an uncharacterized protein from Staphylococcus haemolyticus (strain JCSC1435).